The following is a 653-amino-acid chain: Dystrotelin (653 aa).

A ZZ-type zinc finger spans residues 223–279 (THPVRCSVCRTFPIIGLRYHCLKCLDFDICELCFLSGLHKNSHEKSHTVMEECVQMS). Positions 228, 231, 243, 246, 252, 255, 265, and 269 each coordinate Zn(2+). A coiled-coil region spans residues 384–411 (RDSLNTLLRERRLLRKQLHRYKQKLQGT).

Strongly expressed in the nervous and muscular tissues.

The protein localises to the cell membrane. The sequence is that of Dystrotelin (Dytn) from Mus musculus (Mouse).